Here is a 156-residue protein sequence, read N- to C-terminus: Ribosomal RNA large subunit methyltransferase H (156 aa).

Residues Leu73, Gly104, and 123 to 128 (LSALTL) contribute to the S-adenosyl-L-methionine site.

This sequence belongs to the RNA methyltransferase RlmH family. As to quaternary structure, homodimer.

The protein resides in the cytoplasm. It carries out the reaction pseudouridine(1915) in 23S rRNA + S-adenosyl-L-methionine = N(3)-methylpseudouridine(1915) in 23S rRNA + S-adenosyl-L-homocysteine + H(+). Specifically methylates the pseudouridine at position 1915 (m3Psi1915) in 23S rRNA. The chain is Ribosomal RNA large subunit methyltransferase H from Shewanella frigidimarina (strain NCIMB 400).